The primary structure comprises 306 residues: Ribosomal protein L11 methyltransferase (306 aa).

4 residues coordinate S-adenosyl-L-methionine: T154, G179, D201, and N242.

It belongs to the methyltransferase superfamily. PrmA family.

It is found in the cytoplasm. It catalyses the reaction L-lysyl-[protein] + 3 S-adenosyl-L-methionine = N(6),N(6),N(6)-trimethyl-L-lysyl-[protein] + 3 S-adenosyl-L-homocysteine + 3 H(+). Functionally, methylates ribosomal protein L11. This chain is Ribosomal protein L11 methyltransferase, found in Xylella fastidiosa (strain Temecula1 / ATCC 700964).